Consider the following 201-residue polypeptide: MQLGLDFNLVEDLVAGVDEVGRGPLCGPVVTAAVILDPSRPILGLNDSKKLSEARREALFEEIREKALAWCIARAEVEEIDRLNILHATMLAMQRAVEGLSVTPRLALIDGNRCPKLAVPCAPVVKGDSQVPAIAAASILAKVSRDREMVELDRVYPGYGMAGHKGYPTAVHLEALSRLGPTPIHRRSFAPVRELLDVSVQ.

Residues 12–201 enclose the RNase H type-2 domain; the sequence is DLVAGVDEVG…VRELLDVSVQ (190 aa). A divalent metal cation contacts are provided by Asp-18, Glu-19, and Asp-110.

This sequence belongs to the RNase HII family. Mn(2+) is required as a cofactor. It depends on Mg(2+) as a cofactor.

The protein resides in the cytoplasm. The enzyme catalyses Endonucleolytic cleavage to 5'-phosphomonoester.. Endonuclease that specifically degrades the RNA of RNA-DNA hybrids. This Pseudomonas aeruginosa (strain LESB58) protein is Ribonuclease HII.